A 504-amino-acid chain; its full sequence is D-alanine--D-alanyl carrier protein ligase (504 aa).

Thr152–Ser153 lines the ATP pocket. Position 197 (Asp197) interacts with D-alanine. An ATP-binding site is contributed by Asn292–Thr297. A D-alanine-binding site is contributed by Val301. ATP is bound by residues Asp383, Tyr394–Arg397, and Lys492. D-alanine is bound at residue Lys492.

It belongs to the ATP-dependent AMP-binding enzyme family. DltA subfamily.

The protein resides in the cytoplasm. It catalyses the reaction holo-[D-alanyl-carrier protein] + D-alanine + ATP = D-alanyl-[D-alanyl-carrier protein] + AMP + diphosphate. It participates in cell wall biogenesis; lipoteichoic acid biosynthesis. Its function is as follows. Catalyzes the first step in the D-alanylation of lipoteichoic acid (LTA), the activation of D-alanine and its transfer onto the D-alanyl carrier protein (Dcp) DltC. In an ATP-dependent two-step reaction, forms a high energy D-alanyl-AMP intermediate, followed by transfer of the D-alanyl residue as a thiol ester to the phosphopantheinyl prosthetic group of the Dcp. D-alanylation of LTA plays an important role in modulating the properties of the cell wall in Gram-positive bacteria, influencing the net charge of the cell wall. This is D-alanine--D-alanyl carrier protein ligase from Bacillus cereus (strain B4264).